The primary structure comprises 661 residues: UvrABC system protein B (661 aa).

The 156-residue stretch at 31-186 (DNIEGGEKAQ…LLNALVDIQF (156 aa)) folds into the Helicase ATP-binding domain. 44 to 51 (GATGTGKT) is an ATP binding site. The Beta-hairpin signature appears at 97 to 120 (YYDYYQPEAYVPSSDTYIEKDSSV). The region spanning 435 to 601 (QMDDLLGEIN…TIKKEIRDLI (167 aa)) is the Helicase C-terminal domain. Residues 626-661 (KAMIKKLEGQMQEAAEVLDFELAAQIRDMVIELKNM) form the UVR domain.

It belongs to the UvrB family. In terms of assembly, forms a heterotetramer with UvrA during the search for lesions. Interacts with UvrC in an incision complex.

The protein resides in the cytoplasm. Its function is as follows. The UvrABC repair system catalyzes the recognition and processing of DNA lesions. A damage recognition complex composed of 2 UvrA and 2 UvrB subunits scans DNA for abnormalities. Upon binding of the UvrA(2)B(2) complex to a putative damaged site, the DNA wraps around one UvrB monomer. DNA wrap is dependent on ATP binding by UvrB and probably causes local melting of the DNA helix, facilitating insertion of UvrB beta-hairpin between the DNA strands. Then UvrB probes one DNA strand for the presence of a lesion. If a lesion is found the UvrA subunits dissociate and the UvrB-DNA preincision complex is formed. This complex is subsequently bound by UvrC and the second UvrB is released. If no lesion is found, the DNA wraps around the other UvrB subunit that will check the other stand for damage. This chain is UvrABC system protein B, found in Streptococcus suis (strain 98HAH33).